The sequence spans 123 residues: Large ribosomal subunit protein bL12 (123 aa).

It belongs to the bacterial ribosomal protein bL12 family. In terms of assembly, homodimer. Part of the ribosomal stalk of the 50S ribosomal subunit. Forms a multimeric L10(L12)X complex, where L10 forms an elongated spine to which 2 to 4 L12 dimers bind in a sequential fashion. Binds GTP-bound translation factors.

Functionally, forms part of the ribosomal stalk which helps the ribosome interact with GTP-bound translation factors. Is thus essential for accurate translation. This chain is Large ribosomal subunit protein bL12, found in Rhodospirillum rubrum (strain ATCC 11170 / ATH 1.1.1 / DSM 467 / LMG 4362 / NCIMB 8255 / S1).